A 647-amino-acid polypeptide reads, in one-letter code: DEAD-box ATP-dependent RNA helicase 18 (647 aa).

Positions 23–51 match the Q motif motif; that stretch reads FSELSPALSPEVVKALKGGGFRRCTPVQA. The Helicase ATP-binding domain occupies 54-232; the sequence is IPLLLSHKDV…KAGLRNPVRV (179 aa). 67–74 provides a ligand contact to ATP; sequence AATGSGKT. The DEAD box signature appears at 180 to 183; sequence DEAD. The 157-residue stretch at 274-430 folds into the Helicase C-terminal domain; the sequence is QLVDFLVQNN…DIVPQIRSAA (157 aa). The stretch at 507-582 forms a coiled coil; that stretch reads KYKDKAREKQ…RLLKKLKRGV (76 aa). Positions 512 to 545 are enriched in basic and acidic residues; sequence AREKQRQKTLKRKAEELALRPEIEKRRKAPEKPE. Disordered regions lie at residues 512-565 and 590-647; these read AREK…KEDM and KLTG…TRRR. Residues 596–610 are compositionally biased toward acidic residues; sequence ESDDDDSSDGGDSDL. Residues 619–633 show a composition bias toward basic residues; sequence KVLKKIKQKGKAKGS.

This sequence belongs to the DEAD box helicase family. DDX55/SPB4 subfamily. As to quaternary structure, interacts with BRI1. Post-translationally, phosphorylated.

The catalysed reaction is ATP + H2O = ADP + phosphate + H(+). The polypeptide is DEAD-box ATP-dependent RNA helicase 18 (Oryza sativa subsp. japonica (Rice)).